A 130-amino-acid polypeptide reads, in one-letter code: Glycine cleavage system H protein (130 aa).

The 83-residue stretch at 25–107 folds into the Lipoyl-binding domain; it reads IATIGITEFA…YGEGWFLKVR (83 aa). Residue Lys66 is modified to N6-lipoyllysine.

This sequence belongs to the GcvH family. As to quaternary structure, the glycine cleavage system is composed of four proteins: P, T, L and H. The cofactor is (R)-lipoate.

In terms of biological role, the glycine cleavage system catalyzes the degradation of glycine. The H protein shuttles the methylamine group of glycine from the P protein to the T protein. This Trichormus variabilis (strain ATCC 29413 / PCC 7937) (Anabaena variabilis) protein is Glycine cleavage system H protein.